Reading from the N-terminus, the 345-residue chain is Anthranilate phosphoribosyltransferase (345 aa).

5-phospho-alpha-D-ribose 1-diphosphate-binding positions include Gly79, 82-83, Thr87, 89-92, 106-114, and Ser118; these read GD, NVST, and KHGNRAVSG. Gly79 contacts anthranilate. Ser91 provides a ligand contact to Mg(2+). Residue Asn109 participates in anthranilate binding. Arg164 serves as a coordination point for anthranilate. Mg(2+) contacts are provided by Asp223 and Glu224.

Belongs to the anthranilate phosphoribosyltransferase family. As to quaternary structure, homodimer. It depends on Mg(2+) as a cofactor.

It catalyses the reaction N-(5-phospho-beta-D-ribosyl)anthranilate + diphosphate = 5-phospho-alpha-D-ribose 1-diphosphate + anthranilate. It functions in the pathway amino-acid biosynthesis; L-tryptophan biosynthesis; L-tryptophan from chorismate: step 2/5. Its function is as follows. Catalyzes the transfer of the phosphoribosyl group of 5-phosphorylribose-1-pyrophosphate (PRPP) to anthranilate to yield N-(5'-phosphoribosyl)-anthranilate (PRA). This chain is Anthranilate phosphoribosyltransferase, found in Saccharolobus islandicus (strain L.S.2.15 / Lassen #1) (Sulfolobus islandicus).